A 235-amino-acid chain; its full sequence is Large ribosomal subunit protein uL1 (235 aa).

The protein belongs to the universal ribosomal protein uL1 family. In terms of assembly, part of the 50S ribosomal subunit.

Binds directly to 23S rRNA. The L1 stalk is quite mobile in the ribosome, and is involved in E site tRNA release. Its function is as follows. Protein L1 is also a translational repressor protein, it controls the translation of the L11 operon by binding to its mRNA. In Synechococcus sp. (strain WH7803), this protein is Large ribosomal subunit protein uL1.